Here is a 796-residue protein sequence, read N- to C-terminus: RalBP1-associated Eps domain-containing protein 1 (796 aa).

The 104-residue stretch at 10-113 (EQKYYSDLFS…SKNEQESRHA (104 aa)) folds into the EH 1 domain. A disordered region spans residues 105-237 (KNEQESRHAA…ENWVSFADTP (133 aa)). Over residues 115–126 (SYSSDSENQGSY) the composition is skewed to polar residues. Phosphoserine occurs at positions 143, 145, 162, 166, and 170. Positions 145 to 156 (SHDTVQPRTSAD) are enriched in polar residues. Thr-173 carries the post-translational modification Phosphothreonine. A phosphoserine mark is found at Ser-272 and Ser-273. One can recognise an EH 2 domain in the interval 285–374 (QRQYYVNQFK…ESLMPKLIDL (90 aa)). Tyr-288 bears the Phosphotyrosine mark. Position 307 is a phosphoserine (Ser-307). An EF-hand domain is found at 318–353 (LPILELSHIWELSDFDKDGALTLDEFCAAFHLVVAR). Ca(2+) contacts are provided by Asp-331, Asp-333, Asp-335, and Glu-342. The tract at residues 377 to 433 (SADVGDQPGEVGYSGSPAEAPPSKSPSMPSLNQTWPELNQSSEQWETFSERSSSSQT) is disordered. Residues 407–433 (LNQTWPELNQSSEQWETFSERSSSSQT) are compositionally biased toward polar residues. 4 positions are modified to phosphoserine: Ser-475, Ser-482, Ser-489, and Ser-540. A compositionally biased stretch (polar residues) spans 506–543 (GNTVADGYSSSDSFTSDPEQIGSNVTRQRSHSGTSPDN). 2 disordered regions span residues 506 to 624 (GNTV…IPEQ) and 638 to 725 (ASNV…QKTG). Thr-544 carries the phosphothreonine modification. Residues 544–554 (TAPPPPPPRPQ) show a composition bias toward pro residues. The residue at position 562 (Ser-562) is a Phosphoserine. A compositionally biased stretch (polar residues) spans 563–574 (LDMNRTFTVTTG). Positions 575 to 584 (QQQAGVVAHP) are enriched in low complexity. Residues 585-596 (PAVPPRPQPSQA) show a composition bias toward pro residues. Residues 612-623 (THTSTSPQQIPE) are compositionally biased toward polar residues. Residues 652–796 (HPEVLPAEKA…LEQLRPFSHL (145 aa)) are interaction with RALBP1. Basic and acidic residues-rich tracts occupy residues 671–681 (AKTDSKTEEKT) and 708–722 (KSED…EHTQ). A phosphoserine mark is found at Ser-709 and Ser-740. Residues 751-791 (SIRRNKETNTVLARLNSELQQQLKDVLEERISLEVQLEQLR) adopt a coiled-coil conformation.

As to quaternary structure, homodimer (Potential). Interacts with RAB11FIP2. Interacts with RALBP1, CRK and GRB2. Binding to RALBP1 does not affect its Ral-binding activity. Forms a complex with the SH3 domains of CRK and GRB2 which may link it to an EGF-responsive tyrosine kinase. Interacts with AMPH, ITSN1 (via SH3 domains) and SGIP1; may be involved in clathrin-mediated endocytosis. Post-translationally, EGF stimulates phosphorylation on Tyr-residues. As to expression, widely expressed with highest levels in heart and testis.

It is found in the membrane. Its subcellular location is the clathrin-coated pit. May coordinate the cellular actions of activated EGF receptors and Ral-GTPases. This Homo sapiens (Human) protein is RalBP1-associated Eps domain-containing protein 1 (REPS1).